The primary structure comprises 149 residues: Transcriptional regulator MraZ (149 aa).

SpoVT-AbrB domains lie at 9–52 (AYSY…PRAQ) and 82–125 (AQEV…DRAR).

This sequence belongs to the MraZ family. In terms of assembly, forms oligomers.

It localises to the cytoplasm. It is found in the nucleoid. The chain is Transcriptional regulator MraZ from Treponema pallidum subsp. pallidum (strain SS14).